The chain runs to 475 residues: Ribulose bisphosphate carboxylase large chain (475 aa).

The propeptide occupies 1-2 (MS). N-acetylproline is present on P3. K14 bears the N6,N6,N6-trimethyllysine mark. Substrate-binding residues include N123 and T173. K175 serves as the catalytic Proton acceptor. Residue K177 coordinates substrate. Mg(2+)-binding residues include K201, D203, and E204. K201 bears the N6-carboxylysine mark. The active-site Proton acceptor is H294. The substrate site is built by R295, H327, and S379.

It belongs to the RuBisCO large chain family. Type I subfamily. In terms of assembly, heterohexadecamer of 8 large chains and 8 small chains; disulfide-linked. The disulfide link is formed within the large subunit homodimers. Mg(2+) is required as a cofactor. In terms of processing, the disulfide bond which can form in the large chain dimeric partners within the hexadecamer appears to be associated with oxidative stress and protein turnover.

It is found in the plastid. The protein resides in the chloroplast. It carries out the reaction 2 (2R)-3-phosphoglycerate + 2 H(+) = D-ribulose 1,5-bisphosphate + CO2 + H2O. The catalysed reaction is D-ribulose 1,5-bisphosphate + O2 = 2-phosphoglycolate + (2R)-3-phosphoglycerate + 2 H(+). In terms of biological role, ruBisCO catalyzes two reactions: the carboxylation of D-ribulose 1,5-bisphosphate, the primary event in carbon dioxide fixation, as well as the oxidative fragmentation of the pentose substrate in the photorespiration process. Both reactions occur simultaneously and in competition at the same active site. This is Ribulose bisphosphate carboxylase large chain (rbcL) from Marchantia polymorpha (Common liverwort).